The sequence spans 264 residues: MSVVSLPQLLEAGVHFGHKASRWNPKMRPYIFTERNGIHIIDLVQTARYLNEAYEYVRDAADRGWRFLFVGTKRQAAGIIAQEARRCGSYYVNQRWLGGMLTNWATIKTRIDRLKEIEEMESSGLLDRLPKQEASRLRRELARLEKYLGGIKTMRKLPDAVIIVDQRREANAVQECIKLNIPIISLLDTNCDPDLSDIFIPSNDDAIRAIKLIVGKLADAIYEGRHGQLDTVEEDEYDYEGAMDLDDDILEDMEDEEEGEAEEG.

The protein belongs to the universal ribosomal protein uS2 family.

The chain is Small ribosomal subunit protein uS2 from Synechococcus sp. (strain JA-2-3B'a(2-13)) (Cyanobacteria bacterium Yellowstone B-Prime).